The following is a 372-amino-acid chain: N-methyl-L-tryptophan oxidase (372 aa).

Aspartate 4–histidine 34 is a binding site for FAD. The residue at position 308 (cysteine 308) is an S-8alpha-FAD cysteine.

Belongs to the MSOX/MTOX family. MTOX subfamily. In terms of assembly, monomer. Requires FAD as cofactor.

It carries out the reaction N(alpha)-methyl-L-tryptophan + O2 + H2O = L-tryptophan + formaldehyde + H2O2. Its function is as follows. Catalyzes the oxidative demethylation of N-methyl-L-tryptophan. The chain is N-methyl-L-tryptophan oxidase from Shigella dysenteriae serotype 1 (strain Sd197).